Reading from the N-terminus, the 186-residue chain is dCTP deaminase (186 aa).

107-112 (KSTYAR) provides a ligand contact to dCTP. Glutamate 133 (proton donor/acceptor) is an active-site residue. 3 residues coordinate dCTP: glutamine 152, tyrosine 166, and glutamine 176.

Belongs to the dCTP deaminase family. In terms of assembly, homotrimer.

The catalysed reaction is dCTP + H2O + H(+) = dUTP + NH4(+). Its pathway is pyrimidine metabolism; dUMP biosynthesis; dUMP from dCTP (dUTP route): step 1/2. Its function is as follows. Catalyzes the deamination of dCTP to dUTP. The chain is dCTP deaminase from Campylobacter lari (strain RM2100 / D67 / ATCC BAA-1060).